A 517-amino-acid chain; its full sequence is MLSYLIFALAVSPILGKIEIVFPQHTTGDWKRVPHEYNYCPTSADKNSHGTQTGIPVELTMPKGLTTHQVEGFMCHSALWMTTCDFRWYGPKYITHSIHNEEPTDYQCLEAIKSYKDGVSFNPGFPPQSCGYGTVTDAEAHIVTVTPHSVKVDEYTGEWIDPHFIGGRCKGQICETVHNSTKWFTSSDGESVCSQLFTLVGGIFFSDSEEITSMGLPETGIRSNYFPYISTEGICKMPFCRKQGYKLKNDLWFQIMDPDLDKTVRDLPHIKDCDLSSSIITPGEHATDISLISDVERILDYALCQNTWSKIESGEPITPVDLSYLGPKNPGVGPVFTIINGSLHYFTSKYLRVELESPVIPRMEGKVAGTRIVRQLWDQWFPFGEVEIGPNGVLKTKQGYKFPLHIIGTGEVDSDIKMERVVKHWEHPHIEAAQTFLKKDDTGEVLYYGDTGVSKNPVELVEGWFSGWRSSLMGVLAVIIGFVILMFLIKLIGVLSSLFRPKRRPIYKSDVEMAHFR.

The N-terminal stretch at 1 to 16 (MLSYLIFALAVSPILG) is a signal peptide. The Virion surface portion of the chain corresponds to 17-474 (KIEIVFPQHT…FSGWRSSLMG (458 aa)). Disulfide bonds link Cys40/Cys304, Cys75/Cys108, Cys84/Cys130, Cys169/Cys174, Cys193/Cys240, and Cys235/Cys273. A fusion peptide region spans residues 53–172 (TGIPVELTMP…HFIGGRCKGQ (120 aa)). A glycan (N-linked (GlcNAc...) asparagine; by host) is linked at Asn179. The segment at 259 to 313 (DLDKTVRDLPHIKDCDLSSSIITPGEHATDISLISDVERILDYALCQNTWSKIES) is trimerization. A glycan (N-linked (GlcNAc...) asparagine; by host) is linked at Asn340. The segment at 387–409 (EIGPNGVLKTKQGYKFPLHIIGT) is trimerization. Residues 475–495 (VLAVIIGFVILMFLIKLIGVL) traverse the membrane as a helical segment. The Intravirion segment spans residues 496-517 (SSLFRPKRRPIYKSDVEMAHFR).

This sequence belongs to the vesiculovirus glycoprotein family. In terms of assembly, homotrimer. Interacts with host LDL at target cell surface. Glycosylated by host. Palmitoylated by host.

Its subcellular location is the virion membrane. It localises to the host membrane. Its function is as follows. Attaches the virus to host LDL receptors, inducing clathrin-dependent endocytosis of the virion. In the endosome, the acidic pH induces conformational changes in the glycoprotein trimer, which trigger fusion between virus and endosomal membrane. The protein is Glycoprotein (G) of Aedes (Bovine).